Here is a 107-residue protein sequence, read N- to C-terminus: Small ribosomal subunit protein uS10 (107 aa).

The protein belongs to the universal ribosomal protein uS10 family. Part of the 30S ribosomal subunit.

Involved in the binding of tRNA to the ribosomes. The sequence is that of Small ribosomal subunit protein uS10 from Deinococcus deserti (strain DSM 17065 / CIP 109153 / LMG 22923 / VCD115).